We begin with the raw amino-acid sequence, 599 residues long: Elongation factor 4 (599 aa).

One can recognise a tr-type G domain in the interval 2–184 (KNIRNFSIIA…RLVRDIPPPQ (183 aa)). GTP-binding positions include 14–19 (DHGKST) and 131–134 (NKID).

Belongs to the TRAFAC class translation factor GTPase superfamily. Classic translation factor GTPase family. LepA subfamily.

Its subcellular location is the cell inner membrane. The enzyme catalyses GTP + H2O = GDP + phosphate + H(+). Required for accurate and efficient protein synthesis under certain stress conditions. May act as a fidelity factor of the translation reaction, by catalyzing a one-codon backward translocation of tRNAs on improperly translocated ribosomes. Back-translocation proceeds from a post-translocation (POST) complex to a pre-translocation (PRE) complex, thus giving elongation factor G a second chance to translocate the tRNAs correctly. Binds to ribosomes in a GTP-dependent manner. This chain is Elongation factor 4, found in Salmonella arizonae (strain ATCC BAA-731 / CDC346-86 / RSK2980).